The sequence spans 536 residues: SNW domain-containing protein 1 (536 aa).

The interval 1–44 (MALTSFLPAPTQLSQDQLEAEERARSQRSLQTSLVSSRREPPPY) is disordered. Ala2 carries the N-acetylalanine modification. Ser14 bears the Phosphoserine mark. The span at 27–36 (QRSLQTSLVS) shows a compositional bias: polar residues. An interaction with PPIL1 region spans residues 59-79 (GDGGAFPEIHVAQYPLDMGRK). Residues Lys81, Lys97, Lys115, Lys122, Lys141, Lys158, and Lys170 each participate in a glycyl lysine isopeptide (Lys-Gly) (interchain with G-Cter in SUMO2) cross-link. The segment at 174–339 (AQYIRYTPSQ…KARERRAGIK (166 aa)) is SNW. Ser182 and Ser190 each carry phosphoserine. Residue Lys193 forms a Glycyl lysine isopeptide (Lys-Gly) (interchain with G-Cter in SUMO2) linkage. Residues 212 to 233 (FKINKKIPRGPPSPPAPVMHSP) are disordered. 3 positions are modified to phosphoserine: Ser224, Ser232, and Ser234. Glycyl lysine isopeptide (Lys-Gly) (interchain with G-Cter in SUMO2) cross-links involve residues Lys240, Lys258, Lys286, Lys339, Lys344, Lys416, and Lys441. Residues 311 to 386 (KMAQKEKEKH…RSKLQRNENR (76 aa)) form a disordered region. The residue at position 446 (Ser446) is a Phosphoserine. Lys452 is covalently cross-linked (Glycyl lysine isopeptide (Lys-Gly) (interchain with G-Cter in SUMO2)). Basic and acidic residues-rich tracts occupy residues 467–489 (IKTN…RGRE) and 503–530 (KFLE…EHEG). The interval 467–536 (IKTNRFVPDK…EHEGKKRRKE (70 aa)) is disordered. Phosphoserine is present on residues Ser479 and Ser481. A Glycyl lysine isopeptide (Lys-Gly) (interchain with G-Cter in SUMO2) cross-link involves residue Lys509.

The protein belongs to the SNW family. As to quaternary structure, identified in the spliceosome C complex. Associates with U4/U6-U5 tri-small nuclear ribonucleoproteins (U4/U6-U5 tri-snRNPs). Component of the minor spliceosome, which splices U12-type introns. Interacts with SKI, SMAD2,SMAD3, RBPJ, RB1, PABPN1, MAGEA1, SIRT1, FOXN3, U2AF2, PPIL1, DAXX and ATP1B4. Interacts with VDR and RXRA; preferentially associates with VDR:RXRA heterodimers. Interacts with NCOR2. Interacts with MAML1. Interacts with NOTCH1 NICD; the interaction involves multimerized NOTCH1 NICD. Forms a complex with NOTCH1 NICD and MAML1; the association is dissociated by RBPJ. Associates with positive transcription elongation factor b (P-TEFb). Component of the SNARP complex which consists at least of SNIP1, SNW1, THRAP3, BCLAF1 and PNN.

The protein localises to the nucleus. Functionally, involved in pre-mRNA splicing as component of the spliceosome. As a component of the minor spliceosome, involved in the splicing of U12-type introns in pre-mRNAs. Required in the specific splicing of CDKN1A pre-mRNA; the function probably involves the recruitment of U2AF2 to the mRNA. May recruit PPIL1 to the spliceosome. May be involved in cyclin-D1/CCND1 mRNA stability through the SNARP complex which associates with both the 3'end of the CCND1 gene and its mRNA. Involved in transcriptional regulation. Modulates TGF-beta-mediated transcription via association with SMAD proteins, MYOD1-mediated transcription via association with PABPN1, RB1-mediated transcriptional repression, and retinoid-X receptor (RXR)- and vitamin D receptor (VDR)-dependent gene transcription in a cell line-specific manner probably involving coactivators NCOA1 and GRIP1. Is involved in NOTCH1-mediated transcriptional activation. Binds to multimerized forms of Notch intracellular domain (NICD) and is proposed to recruit transcriptional coactivators such as MAML1 to form an intermediate preactivation complex which associates with DNA-bound CBF-1/RBPJ to form a transcriptional activation complex by releasing SNW1 and redundant NOTCH1 NICD. The sequence is that of SNW domain-containing protein 1 (Snw1) from Mus musculus (Mouse).